The chain runs to 216 residues: Protein Syd (216 aa).

This sequence belongs to the Syd family.

The protein resides in the cell inner membrane. Interacts with the SecY protein in vivo. May bind preferentially to an uncomplexed state of SecY, thus functioning either as a chelating agent for excess SecY in the cell or as a regulatory factor that negatively controls the translocase function. The protein is Protein Syd of Shewanella sp. (strain W3-18-1).